The following is a 489-amino-acid chain: Rhamnulokinase (489 aa).

13–17 (ASSGR) serves as a coordination point for ATP. C68 and C222 form a disulfide bridge. Residues G83 and 236-238 (HDT) each bind substrate. D237 functions as the Proton acceptor in the catalytic mechanism. T259 contributes to the ATP binding site. N296 serves as a coordination point for substrate. ATP is bound at residue Q304. C353 and C370 are oxidised to a cystine. G402 is an ATP binding site. Residues C413 and C417 are joined by a disulfide bond.

Belongs to the rhamnulokinase family. As to quaternary structure, monomer. The cofactor is Mg(2+).

The catalysed reaction is L-rhamnulose + ATP = L-rhamnulose 1-phosphate + ADP + H(+). Its pathway is carbohydrate degradation; L-rhamnose degradation; glycerone phosphate from L-rhamnose: step 2/3. Functionally, involved in the catabolism of L-rhamnose (6-deoxy-L-mannose). Catalyzes the transfer of the gamma-phosphate group from ATP to the 1-hydroxyl group of L-rhamnulose to yield L-rhamnulose 1-phosphate. This is Rhamnulokinase from Escherichia coli O17:K52:H18 (strain UMN026 / ExPEC).